The sequence spans 488 residues: Probable metabolite transport protein YBR241C (488 aa).

The Cytoplasmic portion of the chain corresponds to 1-18 (MAETERLMPNGGSRETKP). Residues 19-39 (LITGHLILGTIVACLGSIQYG) form a helical membrane-spanning segment. The Vacuolar portion of the chain corresponds to 40–87 (YHIAELNAPQEFLSCSRFEAPDENISYDDTWVGQHGLKQCIALTDSQY). N-linked (GlcNAc...) asparagine glycosylation occurs at N63. The helical transmembrane segment at 88–108 (GAITSIFSIGGLFGSYYAGNW) threads the bilayer. Topologically, residues 109-121 (ANRYGRKYVSMGA) are cytoplasmic. A helical transmembrane segment spans residues 122-142 (SAMCMVSSLLLFFSNSYLQLL). The Vacuolar segment spans residues 143-146 (FGRF). A helical membrane pass occupies residues 147–167 (LVGMSCGTAIVITPLFINEIA). The Cytoplasmic portion of the chain corresponds to 168 to 178 (PVEWRGAMGSM). Residues 179–198 (NQVSINLGILLTQTLALKYA) traverse the membrane as a helical segment. Residues 199 to 204 (DSYNWR) are Vacuolar-facing. Residues 205–225 (WLLFSGSVIAVANILAWLKVD) form a helical membrane-spanning segment. At 226–299 (ESPRWLVSHG…DPSYKKPRTV (74 aa)) the chain is on the cytoplasmic side. Positions 258–279 (EIQDWQRSHGHNRDPESSEETH) are enriched in basic and acidic residues. Residues 258-281 (EIQDWQRSHGHNRDPESSEETHSG) form a disordered region. Residues 300–320 (ILAILSCQQFCGINSIIFYGV) traverse the membrane as a helical segment. The Vacuolar portion of the chain corresponds to 321–322 (KV). A helical membrane pass occupies residues 323-337 (IGKILPDYSIQVNFA). At 338-344 (ISILNVV) the chain is on the cytoplasmic side. The chain crosses the membrane as a helical span at residues 345–364 (VTLAASAIIDHVGRRPLLLA). Over 365 to 390 (STTVMTAMSLLISVGLTLSVSFLLVT) the chain is Vacuolar. The chain crosses the membrane as a helical span at residues 391 to 411 (ATFVYIAAFAIGLGPIPFLII). Residues 412 to 419 (GELSYPQD) lie on the Cytoplasmic side of the membrane. A helical membrane pass occupies residues 420–442 (AATAQSFGTVCNWLATFIVGYLF). The Vacuolar segment spans residues 443–446 (PIGH). The helical transmembrane segment at 447–463 (GLMGGYVFAIFAAIAAM) threads the bilayer. Topologically, residues 464–488 (FATYVYKRVPETKGKTTYSEVWAGY) are cytoplasmic.

This sequence belongs to the major facilitator superfamily. Sugar transporter (TC 2.A.1.1) family.

The protein localises to the vacuole membrane. The sequence is that of Probable metabolite transport protein YBR241C from Saccharomyces cerevisiae (strain ATCC 204508 / S288c) (Baker's yeast).